Here is a 186-residue protein sequence, read N- to C-terminus: Elongation factor P (186 aa).

This sequence belongs to the elongation factor P family.

It is found in the cytoplasm. The protein operates within protein biosynthesis; polypeptide chain elongation. Its function is as follows. Involved in peptide bond synthesis. Stimulates efficient translation and peptide-bond synthesis on native or reconstituted 70S ribosomes in vitro. Probably functions indirectly by altering the affinity of the ribosome for aminoacyl-tRNA, thus increasing their reactivity as acceptors for peptidyl transferase. The polypeptide is Elongation factor P (Prochlorococcus marinus (strain MIT 9313)).